We begin with the raw amino-acid sequence, 480 residues long: Vinorine hydroxylase (480 aa).

A helical transmembrane segment spans residues 3–23 (LLQILLAIAGLLAILLLQKQW). A heme-binding site is contributed by cysteine 418.

This sequence belongs to the cytochrome P450 family. Heme serves as cofactor. In terms of tissue distribution, mainly expressed in roots and, to a lesser extent, in leaves.

The protein resides in the membrane. It carries out the reaction vinorine + reduced [NADPH--hemoprotein reductase] + O2 = vomilenine + oxidized [NADPH--hemoprotein reductase] + H2O + H(+). The enzyme catalyses vomilenine = perakine. The protein operates within alkaloid biosynthesis; ajmaline biosynthesis. Its function is as follows. A cytochrome P450 monooxygenase involved in the biosynthesis of ajmaline-type monoterpenoid indole alkaloids (MIAs) natural products, important plant-derived pharmaceuticals used in the therapy of heart disorders. Catalyzes the hydroxylation of vinorine to vomilenine, an intermediate chemical in the biosynthesis of ajmaline. Supports also vomilenine isomerization to perakine. This Rauvolfia serpentina (Serpentine wood) protein is Vinorine hydroxylase.